The following is a 338-amino-acid chain: Methionine import ATP-binding protein MetN 2 (338 aa).

Positions 2–242 (IEIEKVCVDF…PQHAFTQQLV (241 aa)) constitute an ABC transporter domain. An ATP-binding site is contributed by 39 to 46 (GTSGAGKS).

This sequence belongs to the ABC transporter superfamily. Methionine importer (TC 3.A.1.24) family. In terms of assembly, the complex is composed of two ATP-binding proteins (MetN), two transmembrane proteins (MetI) and a solute-binding protein (MetQ).

Its subcellular location is the cell inner membrane. The enzyme catalyses L-methionine(out) + ATP + H2O = L-methionine(in) + ADP + phosphate + H(+). The catalysed reaction is D-methionine(out) + ATP + H2O = D-methionine(in) + ADP + phosphate + H(+). In terms of biological role, part of the ABC transporter complex MetNIQ involved in methionine import. Responsible for energy coupling to the transport system. The chain is Methionine import ATP-binding protein MetN 2 from Salmonella typhimurium (strain LT2 / SGSC1412 / ATCC 700720).